The sequence spans 358 residues: Magnesium-protoporphyrin IX monomethyl ester [oxidative] cyclase 3 (358 aa).

Belongs to the AcsF family. Requires Fe cation as cofactor.

The enzyme catalyses Mg-protoporphyrin IX 13-monomethyl ester + 3 NADPH + 3 O2 + 2 H(+) = 3,8-divinyl protochlorophyllide a + 3 NADP(+) + 5 H2O. It functions in the pathway porphyrin-containing compound metabolism; chlorophyll biosynthesis (light-independent). Catalyzes the formation of the isocyclic ring in chlorophyll biosynthesis. Mediates the cyclase reaction, which results in the formation of divinylprotochlorophyllide (Pchlide) characteristic of all chlorophylls from magnesium-protoporphyrin IX 13-monomethyl ester (MgPMME). The sequence is that of Magnesium-protoporphyrin IX monomethyl ester [oxidative] cyclase 3 from Nostoc sp. (strain PCC 7120 / SAG 25.82 / UTEX 2576).